A 167-amino-acid polypeptide reads, in one-letter code: MICKNSIVTSSSKLFYKMFFIAISIEILEYNYIYPLCIEIAQHSGNIKIALCLKEILQKKKYNLILLKIASIVISNFLSTNTYSFIYTPYDVEILFSNLLLEKYEKDKEMSYMIDVFTKLSHLKQNIIYPYLFNQLKHDCNKKHIFLLLKKIDYTDISTFTHSIFIK.

The protein resides in the plastid. Its subcellular location is the chloroplast. This is an uncharacterized protein from Mesostigma viride (Green alga).